We begin with the raw amino-acid sequence, 320 residues long: Mycothiol acetyltransferase (320 aa).

2 N-acetyltransferase domains span residues 8-141 (SHLT…RSLR) and 152-320 (LQIR…AALA). 1D-myo-inositol 2-(L-cysteinylamino)-2-deoxy-alpha-D-glucopyranoside is bound at residue Glu36. Acetyl-CoA is bound by residues 80-82 (LVV) and 88-93 (RRGIAT). 1D-myo-inositol 2-(L-cysteinylamino)-2-deoxy-alpha-D-glucopyranoside is bound by residues Glu179, Lys229, and Glu239. Residues 243 to 245 (LGV) and 250 to 256 (QGRGLGR) each bind acetyl-CoA. Tyr284 lines the 1D-myo-inositol 2-(L-cysteinylamino)-2-deoxy-alpha-D-glucopyranoside pocket. 289–294 (NIAAVR) contributes to the acetyl-CoA binding site.

Belongs to the acetyltransferase family. MshD subfamily. In terms of assembly, monomer.

It catalyses the reaction 1D-myo-inositol 2-(L-cysteinylamino)-2-deoxy-alpha-D-glucopyranoside + acetyl-CoA = mycothiol + CoA + H(+). In terms of biological role, catalyzes the transfer of acetyl from acetyl-CoA to desacetylmycothiol (Cys-GlcN-Ins) to form mycothiol. This Mycobacterium ulcerans (strain Agy99) protein is Mycothiol acetyltransferase.